The following is a 257-amino-acid chain: 3-methyl-2-oxobutanoate hydroxymethyltransferase (257 aa).

Positions 42 and 86 each coordinate Mg(2+). 3-methyl-2-oxobutanoate is bound by residues 42-43 (DS), D86, and K116. Position 118 (E118) interacts with Mg(2+). E185 functions as the Proton acceptor in the catalytic mechanism.

This sequence belongs to the PanB family. As to quaternary structure, homodecamer; pentamer of dimers. Requires Mg(2+) as cofactor.

Its subcellular location is the cytoplasm. The catalysed reaction is 3-methyl-2-oxobutanoate + (6R)-5,10-methylene-5,6,7,8-tetrahydrofolate + H2O = 2-dehydropantoate + (6S)-5,6,7,8-tetrahydrofolate. The protein operates within cofactor biosynthesis; (R)-pantothenate biosynthesis; (R)-pantoate from 3-methyl-2-oxobutanoate: step 1/2. Its function is as follows. Catalyzes the reversible reaction in which hydroxymethyl group from 5,10-methylenetetrahydrofolate is transferred onto alpha-ketoisovalerate to form ketopantoate. In Prochlorococcus marinus (strain MIT 9215), this protein is 3-methyl-2-oxobutanoate hydroxymethyltransferase.